A 261-amino-acid chain; its full sequence is Cytochrome c oxidase subunit 3 (261 aa).

Residues 1–15 are Mitochondrial matrix-facing; that stretch reads MTNQLHPFHMTNPSP. The chain crosses the membrane as a helical span at residues 16 to 34; it reads WPLTGATAALLMTSGLIMW. The Mitochondrial intermembrane portion of the chain corresponds to 35-40; sequence FHYNSS. A helical transmembrane segment spans residues 41–66; it reads QLIMLGLLIMLLTLTQWWRDIVREST. Residues 67-72 are Mitochondrial matrix-facing; sequence FQGHHT. A helical membrane pass occupies residues 73-105; sequence PSVQNNLRYGMILFITSEILFFTGFFWAFYHSS. The Mitochondrial intermembrane segment spans residues 106-128; the sequence is LSPTAELGNIWPPTGITPLNPFE. The chain crosses the membrane as a helical span at residues 129-152; the sequence is VPLLNTAVLLASGVTITWAHHSLM. Over 153–155 the chain is Mitochondrial matrix; it reads EGN. The helical transmembrane segment at 156-183 threads the bilayer; the sequence is RPQTLQALTLTIILGTYFTILQAMEYFE. The Mitochondrial intermembrane segment spans residues 184–190; sequence ASFTIAD. A helical transmembrane segment spans residues 191–223; sequence SIYGSTFFVATGFHGLHVIIGSTFLIVCLMRQL. Topologically, residues 224 to 232 are mitochondrial matrix; sequence KYHFTSHHH. A helical membrane pass occupies residues 233–256; it reads FGFEAAAWYWHFVDVIWLFLYLSI. Topologically, residues 257-261 are mitochondrial intermembrane; sequence YWWGS.

The protein belongs to the cytochrome c oxidase subunit 3 family. In terms of assembly, component of the cytochrome c oxidase (complex IV, CIV), a multisubunit enzyme composed of 14 subunits. The complex is composed of a catalytic core of 3 subunits MT-CO1, MT-CO2 and MT-CO3, encoded in the mitochondrial DNA, and 11 supernumerary subunits COX4I, COX5A, COX5B, COX6A, COX6B, COX6C, COX7A, COX7B, COX7C, COX8 and NDUFA4, which are encoded in the nuclear genome. The complex exists as a monomer or a dimer and forms supercomplexes (SCs) in the inner mitochondrial membrane with NADH-ubiquinone oxidoreductase (complex I, CI) and ubiquinol-cytochrome c oxidoreductase (cytochrome b-c1 complex, complex III, CIII), resulting in different assemblies (supercomplex SCI(1)III(2)IV(1) and megacomplex MCI(2)III(2)IV(2)).

It is found in the mitochondrion inner membrane. The catalysed reaction is 4 Fe(II)-[cytochrome c] + O2 + 8 H(+)(in) = 4 Fe(III)-[cytochrome c] + 2 H2O + 4 H(+)(out). Functionally, component of the cytochrome c oxidase, the last enzyme in the mitochondrial electron transport chain which drives oxidative phosphorylation. The respiratory chain contains 3 multisubunit complexes succinate dehydrogenase (complex II, CII), ubiquinol-cytochrome c oxidoreductase (cytochrome b-c1 complex, complex III, CIII) and cytochrome c oxidase (complex IV, CIV), that cooperate to transfer electrons derived from NADH and succinate to molecular oxygen, creating an electrochemical gradient over the inner membrane that drives transmembrane transport and the ATP synthase. Cytochrome c oxidase is the component of the respiratory chain that catalyzes the reduction of oxygen to water. Electrons originating from reduced cytochrome c in the intermembrane space (IMS) are transferred via the dinuclear copper A center (CU(A)) of subunit 2 and heme A of subunit 1 to the active site in subunit 1, a binuclear center (BNC) formed by heme A3 and copper B (CU(B)). The BNC reduces molecular oxygen to 2 water molecules using 4 electrons from cytochrome c in the IMS and 4 protons from the mitochondrial matrix. In Pelomedusa subrufa (African side-necked turtle), this protein is Cytochrome c oxidase subunit 3 (MT-CO3).